Reading from the N-terminus, the 396-residue chain is 1-deoxy-D-xylulose 5-phosphate reductoisomerase (396 aa).

Positions 10, 11, 12, 13, 38, and 123 each coordinate NADPH. Residue lysine 124 coordinates 1-deoxy-D-xylulose 5-phosphate. Residue glutamate 125 coordinates NADPH. Aspartate 149 provides a ligand contact to Mn(2+). Positions 150, 151, 185, and 208 each coordinate 1-deoxy-D-xylulose 5-phosphate. Residue glutamate 151 participates in Mn(2+) binding. Glycine 214 contacts NADPH. Residues serine 221, asparagine 226, lysine 227, and glutamate 230 each coordinate 1-deoxy-D-xylulose 5-phosphate. Mn(2+) is bound at residue glutamate 230.

This sequence belongs to the DXR family. Requires Mg(2+) as cofactor. It depends on Mn(2+) as a cofactor.

It catalyses the reaction 2-C-methyl-D-erythritol 4-phosphate + NADP(+) = 1-deoxy-D-xylulose 5-phosphate + NADPH + H(+). It functions in the pathway isoprenoid biosynthesis; isopentenyl diphosphate biosynthesis via DXP pathway; isopentenyl diphosphate from 1-deoxy-D-xylulose 5-phosphate: step 1/6. In terms of biological role, catalyzes the NADPH-dependent rearrangement and reduction of 1-deoxy-D-xylulose-5-phosphate (DXP) to 2-C-methyl-D-erythritol 4-phosphate (MEP). The protein is 1-deoxy-D-xylulose 5-phosphate reductoisomerase of Shewanella piezotolerans (strain WP3 / JCM 13877).